The following is a 167-amino-acid chain: NAD(P)H-quinone oxidoreductase subunit I, chloroplastic (167 aa).

4Fe-4S ferredoxin-type domains are found at residues 55–84 and 95–124; these read GRIH…VDWK and LNYS…MTEE. Positions 64, 67, 70, 74, 104, 107, 110, and 114 each coordinate [4Fe-4S] cluster.

Belongs to the complex I 23 kDa subunit family. NDH is composed of at least 16 different subunits, 5 of which are encoded in the nucleus. [4Fe-4S] cluster is required as a cofactor.

It is found in the plastid. Its subcellular location is the chloroplast thylakoid membrane. The enzyme catalyses a plastoquinone + NADH + (n+1) H(+)(in) = a plastoquinol + NAD(+) + n H(+)(out). The catalysed reaction is a plastoquinone + NADPH + (n+1) H(+)(in) = a plastoquinol + NADP(+) + n H(+)(out). Functionally, NDH shuttles electrons from NAD(P)H:plastoquinone, via FMN and iron-sulfur (Fe-S) centers, to quinones in the photosynthetic chain and possibly in a chloroplast respiratory chain. The immediate electron acceptor for the enzyme in this species is believed to be plastoquinone. Couples the redox reaction to proton translocation, and thus conserves the redox energy in a proton gradient. This chain is NAD(P)H-quinone oxidoreductase subunit I, chloroplastic, found in Pelargonium hortorum (Common geranium).